A 523-amino-acid chain; its full sequence is NAD(P) transhydrogenase subunit alpha (523 aa).

The Cytoplasmic portion of the chain corresponds to 1 to 411 (MKIGAPREIF…AEIATFRKQT (411 aa)). Residues 127–130 (QKMD), Val-177, 197–199 (DVR), and Gly-229 contribute to the NAD(+) site. 2 consecutive transmembrane segments (helical) span residues 412 to 432 (VSQV…GMYA) and 433 to 455 (PPSF…QVIW). At 456-464 (NVSHSLHTP) the chain is on the cytoplasmic side. The chain crosses the membrane as a helical span at residues 465 to 485 (LMAVTNAISGIVILGALLQIG). Over 486 to 489 (SGNV) the chain is Periplasmic. A helical membrane pass occupies residues 490–510 (LVVLLAAISVLIATINIVGGF). Residues 511–523 (LVTRRMLAMFQKS) lie on the Cytoplasmic side of the membrane.

Belongs to the AlaDH/PNT family. In terms of assembly, heterodimer of an alpha (PntA) and a beta (PntB) chain.

It is found in the cell inner membrane. The enzyme catalyses NAD(+) + NADPH + H(+)(in) = NADH + NADP(+) + H(+)(out). Functionally, the transhydrogenation between NADH and NADP is coupled to respiration and ATP hydrolysis and functions as a proton pump across the membrane. The sequence is that of NAD(P) transhydrogenase subunit alpha from Cereibacter sphaeroides (Rhodobacter sphaeroides).